The sequence spans 62 residues: MTQIVVGENEHIESALRRFKREVSKAGIFQDMRKHRHFETPIEKSKRKKLALHKQSKRRFRT.

The segment at 43-62 is disordered; that stretch reads EKSKRKKLALHKQSKRRFRT. The span at 45 to 62 shows a compositional bias: basic residues; the sequence is SKRKKLALHKQSKRRFRT.

The protein belongs to the bacterial ribosomal protein bS21 family.

The protein is Small ribosomal subunit protein bS21C of Trichormus variabilis (strain ATCC 29413 / PCC 7937) (Anabaena variabilis).